The primary structure comprises 327 residues: Phenylalanine--tRNA ligase alpha subunit (327 aa).

Residue Glu252 coordinates Mg(2+).

Belongs to the class-II aminoacyl-tRNA synthetase family. Phe-tRNA synthetase alpha subunit type 1 subfamily. Tetramer of two alpha and two beta subunits. It depends on Mg(2+) as a cofactor.

The protein resides in the cytoplasm. It catalyses the reaction tRNA(Phe) + L-phenylalanine + ATP = L-phenylalanyl-tRNA(Phe) + AMP + diphosphate + H(+). This chain is Phenylalanine--tRNA ligase alpha subunit, found in Yersinia pseudotuberculosis serotype O:1b (strain IP 31758).